A 204-amino-acid polypeptide reads, in one-letter code: Glycerol-3-phosphate acyltransferase (204 aa).

The next 5 membrane-spanning stretches (helical) occupy residues 8–28, 53–73, 81–101, 116–136, and 155–175; these read MLVFAYLLGSINSAIIVCYIF, VPAIITLAFDILKGLVPVVLA, FITACTALYAILGHIFPIFFG, FGFSWILGLIFVVTWLCVAVI, and VIFTSDLQVATPFLIIAIIIL.

The protein belongs to the PlsY family. Probably interacts with PlsX.

It localises to the cell inner membrane. It catalyses the reaction an acyl phosphate + sn-glycerol 3-phosphate = a 1-acyl-sn-glycero-3-phosphate + phosphate. The protein operates within lipid metabolism; phospholipid metabolism. Catalyzes the transfer of an acyl group from acyl-phosphate (acyl-PO(4)) to glycerol-3-phosphate (G3P) to form lysophosphatidic acid (LPA). This enzyme utilizes acyl-phosphate as fatty acyl donor, but not acyl-CoA or acyl-ACP. The chain is Glycerol-3-phosphate acyltransferase from Francisella philomiragia subsp. philomiragia (strain ATCC 25017 / CCUG 19701 / FSC 153 / O#319-036).